The primary structure comprises 440 residues: Xylose isomerase (440 aa).

Catalysis depends on residues histidine 101 and aspartate 104. Glutamate 232, glutamate 268, histidine 271, aspartate 296, aspartate 307, aspartate 309, and aspartate 339 together coordinate Mg(2+).

Belongs to the xylose isomerase family. In terms of assembly, homotetramer. Mg(2+) serves as cofactor.

Its subcellular location is the cytoplasm. It catalyses the reaction alpha-D-xylose = alpha-D-xylulofuranose. This is Xylose isomerase from Salmonella paratyphi B (strain ATCC BAA-1250 / SPB7).